A 444-amino-acid polypeptide reads, in one-letter code: Homogentisate 1,2-dioxygenase (444 aa).

The active-site Proton acceptor is His-298. Positions 341 and 347 each coordinate Fe cation. Homogentisate-binding residues include Tyr-356 and His-377. His-377 contacts Fe cation.

The protein belongs to the homogentisate dioxygenase family. In terms of assembly, hexamer; dimer of trimers. Fe cation serves as cofactor.

It carries out the reaction homogentisate + O2 = 4-maleylacetoacetate + H(+). The protein operates within amino-acid degradation; L-phenylalanine degradation; acetoacetate and fumarate from L-phenylalanine: step 4/6. Its function is as follows. Involved in the catabolism of homogentisate (2,5-dihydroxyphenylacetate or 2,5-OH-PhAc), a central intermediate in the degradation of phenylalanine and tyrosine. Catalyzes the oxidative ring cleavage of the aromatic ring of homogentisate to yield maleylacetoacetate. The chain is Homogentisate 1,2-dioxygenase from Burkholderia orbicola (strain MC0-3).